Here is a 434-residue protein sequence, read N- to C-terminus: Serine hydroxymethyltransferase (434 aa).

(6S)-5,6,7,8-tetrahydrofolate is bound by residues leucine 124 and 128–130 (GHL). Lysine 233 is modified (N6-(pyridoxal phosphate)lysine). (6S)-5,6,7,8-tetrahydrofolate is bound at residue glutamate 249.

This sequence belongs to the SHMT family. Homodimer. Pyridoxal 5'-phosphate serves as cofactor.

Its subcellular location is the cytoplasm. It catalyses the reaction (6R)-5,10-methylene-5,6,7,8-tetrahydrofolate + glycine + H2O = (6S)-5,6,7,8-tetrahydrofolate + L-serine. It functions in the pathway one-carbon metabolism; tetrahydrofolate interconversion. The protein operates within amino-acid biosynthesis; glycine biosynthesis; glycine from L-serine: step 1/1. Functionally, catalyzes the reversible interconversion of serine and glycine with tetrahydrofolate (THF) serving as the one-carbon carrier. This reaction serves as the major source of one-carbon groups required for the biosynthesis of purines, thymidylate, methionine, and other important biomolecules. Also exhibits THF-independent aldolase activity toward beta-hydroxyamino acids, producing glycine and aldehydes, via a retro-aldol mechanism. This Synechococcus sp. (strain JA-3-3Ab) (Cyanobacteria bacterium Yellowstone A-Prime) protein is Serine hydroxymethyltransferase.